Reading from the N-terminus, the 247-residue chain is Probable transcriptional regulatory protein Swit_2142 (247 aa).

Residues 1-14 (MAGHSKFKNIMHRK) are compositionally biased toward basic residues. The interval 1–21 (MAGHSKFKNIMHRKGAQDKKR) is disordered.

The protein belongs to the TACO1 family.

Its subcellular location is the cytoplasm. This chain is Probable transcriptional regulatory protein Swit_2142, found in Rhizorhabdus wittichii (strain DSM 6014 / CCUG 31198 / JCM 15750 / NBRC 105917 / EY 4224 / RW1) (Sphingomonas wittichii).